The following is a 306-amino-acid chain: Pantothenate kinase (306 aa).

ATP is bound at residue 91 to 98 (GSVAVGKS).

This sequence belongs to the prokaryotic pantothenate kinase family.

It is found in the cytoplasm. It catalyses the reaction (R)-pantothenate + ATP = (R)-4'-phosphopantothenate + ADP + H(+). It functions in the pathway cofactor biosynthesis; coenzyme A biosynthesis; CoA from (R)-pantothenate: step 1/5. The polypeptide is Pantothenate kinase (Streptococcus pyogenes serotype M12 (strain MGAS2096)).